The chain runs to 373 residues: 8-amino-7-oxononanoate synthase (373 aa).

Arg-16 serves as a coordination point for substrate. Position 93 to 94 (93 to 94 (GF)) interacts with pyridoxal 5'-phosphate. Position 118 (His-118) interacts with substrate. Pyridoxal 5'-phosphate-binding positions include Ser-165, 190–193 (DEAH), and 222–225 (TFSK). N6-(pyridoxal phosphate)lysine is present on Lys-225. Residue Thr-334 coordinates substrate.

The protein belongs to the class-II pyridoxal-phosphate-dependent aminotransferase family. BioF subfamily. In terms of assembly, homodimer. Pyridoxal 5'-phosphate serves as cofactor.

It catalyses the reaction 6-carboxyhexanoyl-[ACP] + L-alanine + H(+) = (8S)-8-amino-7-oxononanoate + holo-[ACP] + CO2. The protein operates within cofactor biosynthesis; biotin biosynthesis. Its function is as follows. Catalyzes the decarboxylative condensation of pimeloyl-[acyl-carrier protein] and L-alanine to produce 8-amino-7-oxononanoate (AON), [acyl-carrier protein], and carbon dioxide. The chain is 8-amino-7-oxononanoate synthase from Helicobacter pylori (strain ATCC 700392 / 26695) (Campylobacter pylori).